The chain runs to 261 residues: Zinc finger protein 664 (261 aa).

9 consecutive C2H2-type zinc fingers follow at residues Y3 to H25, H31 to H53, Y59 to H81, Y87 to H109, Y115 to H137, F143 to H165, Y171 to H193, Y199 to H221, and F227 to H249. A Glycyl lysine isopeptide (Lys-Gly) (interchain with G-Cter in SUMO2) cross-link involves residue K257.

The protein belongs to the krueppel C2H2-type zinc-finger protein family.

The protein resides in the nucleus. Its function is as follows. May be involved in transcriptional regulation. In Homo sapiens (Human), this protein is Zinc finger protein 664.